The primary structure comprises 125 residues: UPF0389 protein CG9231 (125 aa).

A helical transmembrane segment spans residues 69-88; it reads IRLANIMIALTAVGCAIMVY. A glycan (N-linked (GlcNAc...) asparagine) is linked at asparagine 112.

It belongs to the UPF0389 family.

The protein resides in the membrane. The chain is UPF0389 protein CG9231 from Drosophila melanogaster (Fruit fly).